The chain runs to 333 residues: Starch-binding domain-containing protein 1 (333 aa).

Over 1 to 6 (MGAVWS) the chain is Extracellular. A helical transmembrane segment spans residues 7 to 23 (ALLVGGGLAGALILWLL). At 24 to 333 (RGDSGAPGKD…KVVHGWWGIH (310 aa)) the chain is on the cytoplasmic side. Disordered regions lie at residues 31-73 (GKDG…ELVS) and 106-139 (NAREYVPVGKVPDTHSRANSETSRNQSPESRVGE). Over residues 50-61 (PGGGPGGGGSGG) the composition is skewed to gly residues. Residue serine 67 is modified to Phosphoserine. A compositionally biased stretch (polar residues) spans 124–134 (NSETSRNQSPE). Phosphoserine is present on residues serine 135 and serine 162. Positions 181 to 187 (HEDWEVV) match the LIR motif. 7 positions are modified to phosphoserine: serine 191, serine 192, serine 201, serine 205, serine 208, serine 216, and serine 219. One can recognise a CBM20 domain in the interval 233–332 (SVKPRQVSIQ…DKVVHGWWGI (100 aa)).

Interacts with the ATG8 family proteins GABARAP and GABARAPL1. Interacts with several glycogen-associated proteins, such as GYS2 (liver glycogen synthase), GDE (glycogen debranching enzyme), GBE1 (glycogen branching enzyme 1) and EPM2A (Laforin). Ubiquitinated, which leads to proteasomal degradation.

Its subcellular location is the preautophagosomal structure membrane. The protein resides in the endoplasmic reticulum membrane. The protein localises to the cell membrane. It is found in the sarcolemma. It localises to the T-tubule. Functionally, acts as a cargo receptor for glycogen. Delivers its cargo to an autophagic pathway called glycophagy, resulting in the transport of glycogen to lysosomes. This chain is Starch-binding domain-containing protein 1, found in Rattus norvegicus (Rat).